We begin with the raw amino-acid sequence, 553 residues long: Zinc finger protein 426 (553 aa).

One can recognise a KRAB domain in the interval 40-111 (VSFDDVIVDF…KIVFPEWKIQ (72 aa)). C2H2-type zinc fingers lie at residues 222–244 (FECS…QRTH), 277–299 (HRCK…MRTH), 305–327 (YECK…GRTH), 333–355 (YVCN…VRSH), 361–383 (YACK…IRTH), 389–411 (FVCV…LKMH), 417–439 (CECK…MRTH), 445–467 (YTCK…MRIH), 473–495 (YECK…ERTH), 501–525 (YECK…SHTH), and 531–553 (YKCQ…ERIH).

The protein resides in the nucleus. Its function is as follows. May be involved in transcriptional regulation. The protein is Zinc finger protein 426 (Znf426) of Rattus norvegicus (Rat).